Here is a 231-residue protein sequence, read N- to C-terminus: MADLNGAYYGPSIPPPKKVSHSHGRRGGGCGCLGDCLGCCGCCILSVIFNILITIAVLLGIAALIIWLIFRPNAIKFHVTDAKLTEFTLDPTNNLRYNLDLNFTIRNPNRRIGVYYDEIEVRGYYGDQRFGMSNNISKFYQGHKNTTVVGTKLVGQQLVLLDGGERKDLNEDVNSQIYRIDAKLRLKIRFKFGLIKSWRFKPKIKCDLKVPLTSNSTSGFVFQPTKCDVDF.

The chain crosses the membrane as a helical span at residues Val-47–Trp-67. N-linked (GlcNAc...) asparagine glycosylation is found at Asn-102, Asn-135, Asn-145, and Asn-215.

In terms of assembly, may form oligomers or be a component of larger protein complex in plasma membranes. Glycosylated. As to expression, expressed in roots, young and senescing leaves, cauline leaves, stems and siliques.

Its subcellular location is the cell membrane. Its function is as follows. Confers resistance to Pseudomonas syringae pv. tomato DC3000 (Pst DC3000). This Arabidopsis thaliana (Mouse-ear cress) protein is NDR1/HIN1-like protein 3.